The following is a 166-amino-acid chain: Signal peptidase complex catalytic subunit SEC11 (166 aa).

Over M1–Q9 the chain is Cytoplasmic. A helical; Signal-anchor for type II membrane protein transmembrane segment spans residues F10–I30. The Lumenal segment spans residues A31–E166. Active-site charge relay system residues include S44, H83, and D108. Residues G152–F163 are C-terminal short (CTS) helix.

This sequence belongs to the peptidase S26B family. Component of the signal peptidase complex (SPC) composed of a catalytic subunit SEC11 and three accessory subunits SPC1, SPC2 and SPC3. The complex induces a local thinning of the ER membrane which is used to measure the length of the signal peptide (SP) h-region of protein substrates. This ensures the selectivity of the complex towards h-regions shorter than 18-20 amino acids. SPC associates with the translocon complex.

The protein localises to the endoplasmic reticulum membrane. It catalyses the reaction Cleavage of hydrophobic, N-terminal signal or leader sequences from secreted and periplasmic proteins.. Functionally, catalytic component of the signal peptidase complex (SPC) which catalyzes the cleavage of N-terminal signal sequences from nascent proteins as they are translocated into the lumen of the endoplasmic reticulum. Specifically cleaves N-terminal signal peptides that contain a hydrophobic alpha-helix (h-region) shorter than 18-20 amino acids. The polypeptide is Signal peptidase complex catalytic subunit SEC11 (SEC11) (Candida dubliniensis (strain CD36 / ATCC MYA-646 / CBS 7987 / NCPF 3949 / NRRL Y-17841) (Yeast)).